Reading from the N-terminus, the 270-residue chain is Nuclear receptor-interacting protein 2 (270 aa).

Residues 1-27 (MSTGQEARRDEGDSRKEQEASLRDRAH) are compositionally biased toward basic and acidic residues. Residues 1-33 (MSTGQEARRDEGDSRKEQEASLRDRAHLSQQRQ) are disordered. The segment at 61-99 (KDLQPHSVIQRRLVEGNQRRLQGESPLLQALIRGHDSSR) is interaction with NR1F2. The short motif at 192–196 (LQTLL) is the LXXLL motif element.

Interacts with NR1F2, RARA and THRB in a ligand-dependent manner. In terms of tissue distribution, expression is restricted to the central nervous system (neurons in the dentate gyrus of the hippocampus, the amygdala, thalamic and hypothalamic regions).

It is found in the nucleus. Down-regulates transcriptional activation by nuclear receptors, such as NR1F2. This is Nuclear receptor-interacting protein 2 (Nrip2) from Mus musculus (Mouse).